The sequence spans 319 residues: Annexin A5 (319 aa).

Alanine 2 carries the N-acetylalanine modification. 4 Annexin repeats span residues 13 to 84 (FDGR…AMMK), 85 to 156 (PSRL…VLLQ), 168 to 240 (AQVE…AVVK), and 244 to 315 (SIPA…LLCG). Lysine 27 is covalently cross-linked (Glycyl lysine isopeptide (Lys-Gly) (interchain with G-Cter in SUMO1); alternate). Residue lysine 27 forms a Glycyl lysine isopeptide (Lys-Gly) (interchain with G-Cter in SUMO2); alternate linkage. At serine 35 the chain carries Phosphoserine. N6-acetyllysine is present on residues lysine 68, lysine 74, lysine 77, lysine 95, and lysine 99. Residue lysine 288 is modified to N6-succinyllysine. The [IL]-x-C-x-x-[DE] motif signature appears at 312–318 (LLCGGED).

The protein belongs to the annexin family. Monomer. Binds ATRX and EIF5B. S-nitrosylation is induced by interferon-gamma and oxidatively-modified low-densitity lipoprotein (LDL(ox)) possibly implicating the iNOS-S100A8/9 transnitrosylase complex.

In terms of biological role, this protein is an anticoagulant protein that acts as an indirect inhibitor of the thromboplastin-specific complex, which is involved in the blood coagulation cascade. The chain is Annexin A5 (Anxa5) from Mus musculus (Mouse).